Here is a 290-residue protein sequence, read N- to C-terminus: Zinc finger protein-like 1 homolog (290 aa).

A B box-type; degenerate zinc finger spans residues 1–43 (MGLCKCPKRQVTTQFCFEHRVNVCENCMVVNHTKCTVQSYIQW). Residues 53–101 (CPLCGSPLDNEDCVRLICYHVFHWKCLNAKQQSLPANTAPGGHTCPTCS) form an RING-type; atypical zinc finger. Residues 156–168 (NGNTFASSMSQTR) show a composition bias toward polar residues. The segment at 156–175 (NGNTFASSMSQTRSNERPES) is disordered. The chain crosses the membrane as a helical span at residues 249–269 (WFLVLGGCIGFVCIIYVLATL).

Belongs to the ZFPL1 family.

It localises to the membrane. This chain is Zinc finger protein-like 1 homolog, found in Aedes aegypti (Yellowfever mosquito).